Reading from the N-terminus, the 535-residue chain is CTP synthase (535 aa).

Residues Met1–Leu267 are amidoligase domain. Residue Ser13 coordinates CTP. Residue Ser13 coordinates UTP. An ATP-binding site is contributed by Ser14 to Ile19. Tyr54 provides a ligand contact to L-glutamine. Position 71 (Asp71) interacts with ATP. Residues Asp71 and Glu141 each contribute to the Mg(2+) site. Residues Asp148 to Glu150, Lys188 to Gln193, and Lys224 each bind CTP. UTP contacts are provided by residues Lys188–Gln193 and Lys224. Arg240–Ala242 contacts ATP. Positions Lys292 to Ser534 constitute a Glutamine amidotransferase type-1 domain. Gly354 contributes to the L-glutamine binding site. Cys381 serves as the catalytic Nucleophile; for glutamine hydrolysis. Residues Leu382 to Gln385, Glu405, and Arg462 contribute to the L-glutamine site. Active-site residues include His507 and Glu509.

This sequence belongs to the CTP synthase family. As to quaternary structure, homotetramer.

It carries out the reaction UTP + L-glutamine + ATP + H2O = CTP + L-glutamate + ADP + phosphate + 2 H(+). It catalyses the reaction L-glutamine + H2O = L-glutamate + NH4(+). The enzyme catalyses UTP + NH4(+) + ATP = CTP + ADP + phosphate + 2 H(+). Its pathway is pyrimidine metabolism; CTP biosynthesis via de novo pathway; CTP from UDP: step 2/2. Allosterically activated by GTP, when glutamine is the substrate; GTP has no effect on the reaction when ammonia is the substrate. The allosteric effector GTP functions by stabilizing the protein conformation that binds the tetrahedral intermediate(s) formed during glutamine hydrolysis. Inhibited by the product CTP, via allosteric rather than competitive inhibition. In terms of biological role, catalyzes the ATP-dependent amination of UTP to CTP with either L-glutamine or ammonia as the source of nitrogen. Regulates intracellular CTP levels through interactions with the four ribonucleotide triphosphates. This chain is CTP synthase, found in Bacillus thuringiensis subsp. konkukian (strain 97-27).